The primary structure comprises 252 residues: Small ribosomal subunit protein eS1B (252 aa).

A2 carries the post-translational modification N-acetylalanine; partial. A Phosphoserine modification is found at S251.

The protein belongs to the eukaryotic ribosomal protein eS1 family. Component of the small ribosomal subunit (SSU). Mature yeast ribosomes consist of a small (40S) and a large (60S) subunit. The 40S small subunit contains 1 molecule of ribosomal RNA (18S rRNA) and at least 33 different proteins. The large 60S subunit contains 3 rRNA molecules (25S, 5.8S and 5S rRNA) and at least 46 different proteins. eS1 interacts directly with uS11 and eS26, which form part of the mRNA exit tunnel.

It is found in the cytoplasm. Component of the ribosome, a large ribonucleoprotein complex responsible for the synthesis of proteins in the cell. The small ribosomal subunit (SSU) binds messenger RNAs (mRNAs) and translates the encoded message by selecting cognate aminoacyl-transfer RNA (tRNA) molecules. The large subunit (LSU) contains the ribosomal catalytic site termed the peptidyl transferase center (PTC), which catalyzes the formation of peptide bonds, thereby polymerizing the amino acids delivered by tRNAs into a polypeptide chain. The nascent polypeptides leave the ribosome through a tunnel in the LSU and interact with protein factors that function in enzymatic processing, targeting, and the membrane insertion of nascent chains at the exit of the ribosomal tunnel. The sequence is that of Small ribosomal subunit protein eS1B (rps102) from Schizosaccharomyces pombe (strain 972 / ATCC 24843) (Fission yeast).